Here is a 151-residue protein sequence, read N- to C-terminus: Ribosome maturation factor RimP (151 aa).

Belongs to the RimP family.

Its subcellular location is the cytoplasm. Functionally, required for maturation of 30S ribosomal subunits. The sequence is that of Ribosome maturation factor RimP from Saccharophagus degradans (strain 2-40 / ATCC 43961 / DSM 17024).